The following is a 1378-amino-acid chain: DNA-directed RNA polymerase subunit beta (1378 aa).

It belongs to the RNA polymerase beta chain family. As to quaternary structure, the RNAP catalytic core consists of 2 alpha, 1 beta, 1 beta' and 1 omega subunit. When a sigma factor is associated with the core the holoenzyme is formed, which can initiate transcription.

The catalysed reaction is RNA(n) + a ribonucleoside 5'-triphosphate = RNA(n+1) + diphosphate. In terms of biological role, DNA-dependent RNA polymerase catalyzes the transcription of DNA into RNA using the four ribonucleoside triphosphates as substrates. This Hyphomonas neptunium (strain ATCC 15444) protein is DNA-directed RNA polymerase subunit beta.